We begin with the raw amino-acid sequence, 596 residues long: Elongation factor 4 (596 aa).

One can recognise a tr-type G domain in the interval 2-184; it reads KHIRNFSIIA…VIVAKIPPPE (183 aa). Residues 14 to 19 and 131 to 134 each bind GTP; these read DHGKST and NKID.

It belongs to the TRAFAC class translation factor GTPase superfamily. Classic translation factor GTPase family. LepA subfamily.

The protein localises to the cell inner membrane. The enzyme catalyses GTP + H2O = GDP + phosphate + H(+). Its function is as follows. Required for accurate and efficient protein synthesis under certain stress conditions. May act as a fidelity factor of the translation reaction, by catalyzing a one-codon backward translocation of tRNAs on improperly translocated ribosomes. Back-translocation proceeds from a post-translocation (POST) complex to a pre-translocation (PRE) complex, thus giving elongation factor G a second chance to translocate the tRNAs correctly. Binds to ribosomes in a GTP-dependent manner. The sequence is that of Elongation factor 4 from Shewanella putrefaciens (strain CN-32 / ATCC BAA-453).